We begin with the raw amino-acid sequence, 626 residues long: Methanol dehydrogenase [cytochrome c] subunit 1 (626 aa).

The N-terminal stretch at 1 to 27 is a signal peptide; sequence MSRFVTSVSALAMLALAPAALSSVAYA. Cysteine 130 and cysteine 131 are oxidised to a cystine. Glutamate 204 and asparagine 288 together coordinate Ca(2+). Residue aspartate 330 is the Proton acceptor of the active site. A disulfide bridge links cysteine 413 with cysteine 442.

The protein belongs to the bacterial PQQ dehydrogenase family. As to quaternary structure, heterotetramer composed of 2 alpha and 2 beta subunits. Requires pyrroloquinoline quinone as cofactor. It depends on Ca(2+) as a cofactor.

The protein resides in the cell inner membrane. It carries out the reaction 2 Fe(III)-[cytochrome cL] + a primary alcohol = 2 Fe(II)-[cytochrome cL] + an aldehyde + 2 H(+). Its function is as follows. Catalyzes the oxidation of primary alcohols including methanol. This is Methanol dehydrogenase [cytochrome c] subunit 1 (moxF) from Methylobacterium organophilum.